The chain runs to 244 residues: Cobalt transport protein CbiM (244 aa).

The N-terminal stretch at 1 to 28 (MKLLKNKKVTFVALLAILAVLSTQSVSA) is a signal peptide. A run of 6 helical transmembrane segments spans residues 36-56 (LPLF…VVGL), 71-91 (TMLA…IPSV), 108-128 (FGPS…ALLL), 135-155 (TLGA…YFVY), 166-186 (PVSI…TTSI), and 208-228 (GVFL…TVVL).

It belongs to the CbiM family. In terms of assembly, forms an energy-coupling factor (ECF) transporter complex composed of an ATP-binding protein (A component, CbiO), a transmembrane protein (T component, CbiQ) and 2 possible substrate-capture proteins (S components, CbiM and CbiN) of unknown stoichimetry.

The protein resides in the cell membrane. It participates in cofactor biosynthesis; adenosylcobalamin biosynthesis. Part of the energy-coupling factor (ECF) transporter complex CbiMNOQ involved in cobalt import. The sequence is that of Cobalt transport protein CbiM from Streptococcus sanguinis (strain SK36).